Here is a 169-residue protein sequence, read N- to C-terminus: Large ribosomal subunit protein uL10 (169 aa).

This sequence belongs to the universal ribosomal protein uL10 family. Part of the ribosomal stalk of the 50S ribosomal subunit. The N-terminus interacts with L11 and the large rRNA to form the base of the stalk. The C-terminus forms an elongated spine to which L12 dimers bind in a sequential fashion forming a multimeric L10(L12)X complex.

In terms of biological role, forms part of the ribosomal stalk, playing a central role in the interaction of the ribosome with GTP-bound translation factors. The polypeptide is Large ribosomal subunit protein uL10 (Rickettsia rickettsii (strain Iowa)).